The chain runs to 514 residues: Transcription termination factor Rho (514 aa).

The interval 25 to 52 (EPSSTPGPARNARRSNRRMRHPDKDVDK) is disordered. Residues 35–45 (NARRSNRRMRH) show a composition bias toward basic residues. The Rho RNA-BD domain occupies 141–216 (LMYGEGTLEI…LRIEAINHAD (76 aa)). ATP is bound by residues 259-264 (GFGQRG), 271-276 (RAGKTM), and R302.

The protein belongs to the Rho family. Homohexamer. The homohexamer assembles into an open ring structure.

Functionally, facilitates transcription termination by a mechanism that involves Rho binding to the nascent RNA, activation of Rho's RNA-dependent ATPase activity, and release of the mRNA from the DNA template. The protein is Transcription termination factor Rho of Rhodopirellula baltica (strain DSM 10527 / NCIMB 13988 / SH1).